Consider the following 347-residue polypeptide: D-alanine--D-alanine ligase (347 aa).

The region spanning 131–333 (KRVLESAGIA…YPELIERLVD (203 aa)) is the ATP-grasp domain. 161–216 (EEKLAYPVFTKPSNMGSSVGISKSENQEELRQALKLAFRYDSRVLVEQGVNAREIE) provides a ligand contact to ATP. Mg(2+) is bound by residues D287, E300, and N302.

This sequence belongs to the D-alanine--D-alanine ligase family. It depends on Mg(2+) as a cofactor. Mn(2+) serves as cofactor.

Its subcellular location is the cytoplasm. It catalyses the reaction 2 D-alanine + ATP = D-alanyl-D-alanine + ADP + phosphate + H(+). The protein operates within cell wall biogenesis; peptidoglycan biosynthesis. Its function is as follows. Cell wall formation. This chain is D-alanine--D-alanine ligase, found in Streptococcus pneumoniae (strain JJA).